We begin with the raw amino-acid sequence, 135 residues long: ATP synthase epsilon chain (135 aa).

Residues 84–107 are disordered; the sequence is SLSEEKQSEEQKQRLERAKKALSS. A compositionally biased stretch (basic and acidic residues) spans 86–102; that stretch reads SEEKQSEEQKQRLERAK.

The protein belongs to the ATPase epsilon chain family. In terms of assembly, F-type ATPases have 2 components, CF(1) - the catalytic core - and CF(0) - the membrane proton channel. CF(1) has five subunits: alpha(3), beta(3), gamma(1), delta(1), epsilon(1). CF(0) has three main subunits: a, b and c.

Its subcellular location is the cell membrane. Its function is as follows. Produces ATP from ADP in the presence of a proton gradient across the membrane. This is ATP synthase epsilon chain from Elusimicrobium minutum (strain Pei191).